Consider the following 257-residue polypeptide: 3-deoxy-manno-octulosonate cytidylyltransferase (257 aa).

The protein belongs to the KdsB family.

The protein localises to the cytoplasm. The catalysed reaction is 3-deoxy-alpha-D-manno-oct-2-ulosonate + CTP = CMP-3-deoxy-beta-D-manno-octulosonate + diphosphate. It functions in the pathway nucleotide-sugar biosynthesis; CMP-3-deoxy-D-manno-octulosonate biosynthesis; CMP-3-deoxy-D-manno-octulosonate from 3-deoxy-D-manno-octulosonate and CTP: step 1/1. It participates in bacterial outer membrane biogenesis; lipopolysaccharide biosynthesis. Its function is as follows. Activates KDO (a required 8-carbon sugar) for incorporation into bacterial lipopolysaccharide in Gram-negative bacteria. The chain is 3-deoxy-manno-octulosonate cytidylyltransferase from Methylobacillus flagellatus (strain ATCC 51484 / DSM 6875 / VKM B-1610 / KT).